The chain runs to 110 residues: Protein NATD1 (110 aa).

The N-acetyltransferase domain maps to 19–109 (EHDRQRRQFS…PLPQYLERLQ (91 aa)).

The protein belongs to the NATD1 family. As to expression, expressed in the heart, testis, kidney and lung.

This chain is Protein NATD1 (Natd1), found in Mus musculus (Mouse).